A 543-amino-acid polypeptide reads, in one-letter code: Secreted effector protein SptP (543 aa).

Residues 35–139 (TDKAYVAPEK…FINLIKNKDN (105 aa)) are chaperone-binding. Positions 162–293 (DVGAESKQPL…TAELEKIKAG (132 aa)) constitute a Bacterial Rho-GAP domain. A Tyrosine-protein phosphatase domain is found at 315-543 (IPINQQTQVK…QAQLLMTTAS (229 aa)). The active-site Phosphocysteine intermediate is the C481.

As to quaternary structure, forms a complex with SicP.

The protein localises to the secreted. It is found in the host cytoplasm. The catalysed reaction is O-phospho-L-tyrosyl-[protein] + H2O = L-tyrosyl-[protein] + phosphate. Its function is as follows. Effector proteins function to alter host cell physiology and promote bacterial survival in host tissues. This protein includes tyrosine phosphatase and GTPase activating protein (GAP) activities. After bacterial internalization, GAP mediates the reversal of the cytoskeletal changes induced by SopE. This function is independent of its tyrosine phosphatase activity, which remains unclear. This chain is Secreted effector protein SptP (sptP), found in Salmonella typhi.